A 210-amino-acid chain; its full sequence is MASTVSPNRMTLLALKRRYTISKRGLKLLKDKLEAMVKAFRDLYTEFDRERRYIEELMEAFVELLNQYESETSPAVRDRIRSMQLFQVEYELSTRMVFNIKVPFLDVSLKRMDIPDLYLQTGPAFYKALSVYEELLPHLLKLASLRNALHMMSVEIEKTRRRSNALEYNVVPELERTIKWVQQYLDEMERSQTVRIMKVKSMLEKERGNA.

It belongs to the V-ATPase D subunit family.

In terms of biological role, produces ATP from ADP in the presence of a proton gradient across the membrane. The chain is V-type ATP synthase subunit D from Coprothermobacter proteolyticus (strain ATCC 35245 / DSM 5265 / OCM 4 / BT).